A 130-amino-acid polypeptide reads, in one-letter code: Small ribosomal subunit protein uS8 (130 aa).

Belongs to the universal ribosomal protein uS8 family. In terms of assembly, part of the 30S ribosomal subunit.

One of the primary rRNA binding proteins, it binds directly to 16S rRNA central domain where it helps coordinate assembly of the platform of the 30S subunit. In Pyrococcus furiosus (strain ATCC 43587 / DSM 3638 / JCM 8422 / Vc1), this protein is Small ribosomal subunit protein uS8.